Reading from the N-terminus, the 187-residue chain is Protein GrpE (187 aa).

The segment covering 1–15 (MKETKQEEMEVREDC) has biased composition (basic and acidic residues). Residues 1–40 (MKETKQEEMEVREDCESVDSNLEATVEEMESTKGTSEDLE) are disordered.

The protein belongs to the GrpE family. As to quaternary structure, homodimer.

The protein resides in the cytoplasm. Participates actively in the response to hyperosmotic and heat shock by preventing the aggregation of stress-denatured proteins, in association with DnaK and GrpE. It is the nucleotide exchange factor for DnaK and may function as a thermosensor. Unfolded proteins bind initially to DnaJ; upon interaction with the DnaJ-bound protein, DnaK hydrolyzes its bound ATP, resulting in the formation of a stable complex. GrpE releases ADP from DnaK; ATP binding to DnaK triggers the release of the substrate protein, thus completing the reaction cycle. Several rounds of ATP-dependent interactions between DnaJ, DnaK and GrpE are required for fully efficient folding. The chain is Protein GrpE from Alkaliphilus oremlandii (strain OhILAs) (Clostridium oremlandii (strain OhILAs)).